Here is a 432-residue protein sequence, read N- to C-terminus: MDVWVIGGGLAGSEAALTLADLGFPVTLFEMRPAVMTPAHKTSKLAELVCSNSLGSLSTDNAKGELLFELKVLGSSLVNLAFEAQIGGDKALVVDRELFSTLVEDAVRSHRNITVVRAEITEIPKDVPCIIAPGPLIKGDLLHFLEEREGRCEAQYYDATSPSILSETIDMDYAFWGNRFGEGSDYLNVPLSKEEYYWFVEQLLNAREAHRHDFDKPDAFFERCLPVEEIARRGKESLAFGPMRPTGLAIPEKFRDVHAVIQLRKENASGTILNMVGFQTGISHTEQISIFKQLPAFKNAVFVRLGQIHQNRFLPGVVNKFFQSRTNRLWFYAGQFTGTEGYLEAIAGGLWAGINVARLLGGEKLIPLPEESMLGGLVTYIEQSLPEVKQPMGVNWGLVPPVEGKKSERKQKRVDRARIAIEYAARELGRVT.

7 to 12 (GGGLAG) provides a ligand contact to FAD.

The protein belongs to the MnmG family. TrmFO subfamily. Requires FAD as cofactor.

It localises to the cytoplasm. The catalysed reaction is uridine(54) in tRNA + (6R)-5,10-methylene-5,6,7,8-tetrahydrofolate + NADH + H(+) = 5-methyluridine(54) in tRNA + (6S)-5,6,7,8-tetrahydrofolate + NAD(+). It carries out the reaction uridine(54) in tRNA + (6R)-5,10-methylene-5,6,7,8-tetrahydrofolate + NADPH + H(+) = 5-methyluridine(54) in tRNA + (6S)-5,6,7,8-tetrahydrofolate + NADP(+). Its function is as follows. Catalyzes the folate-dependent formation of 5-methyl-uridine at position 54 (M-5-U54) in all tRNAs. The polypeptide is Methylenetetrahydrofolate--tRNA-(uracil-5-)-methyltransferase TrmFO (Coprothermobacter proteolyticus (strain ATCC 35245 / DSM 5265 / OCM 4 / BT)).